Consider the following 143-residue polypeptide: Nucleoside diphosphate kinase (143 aa).

Lys-11, Phe-59, Arg-87, Thr-93, Arg-104, and Asn-114 together coordinate ATP. The Pros-phosphohistidine intermediate role is filled by His-117.

It belongs to the NDK family. In terms of assembly, homotetramer. The cofactor is Mg(2+).

Its subcellular location is the cytoplasm. It catalyses the reaction a 2'-deoxyribonucleoside 5'-diphosphate + ATP = a 2'-deoxyribonucleoside 5'-triphosphate + ADP. The enzyme catalyses a ribonucleoside 5'-diphosphate + ATP = a ribonucleoside 5'-triphosphate + ADP. Major role in the synthesis of nucleoside triphosphates other than ATP. The ATP gamma phosphate is transferred to the NDP beta phosphate via a ping-pong mechanism, using a phosphorylated active-site intermediate. The polypeptide is Nucleoside diphosphate kinase (Shewanella sediminis (strain HAW-EB3)).